We begin with the raw amino-acid sequence, 133 residues long: Snaclec A9 (133 aa).

3 disulfide bridges follow: Cys-4/Cys-15, Cys-32/Cys-131, and Cys-106/Cys-123. Residues Tyr-11–Glu-132 enclose the C-type lectin domain.

It belongs to the snaclec family. Heterodimer; disulfide-linked. In terms of tissue distribution, expressed by the venom gland.

The protein resides in the secreted. Its function is as follows. Interferes with one step of hemostasis (modulation of platelet aggregation, or coagulation cascade, for example). In Macrovipera lebetinus (Levantine viper), this protein is Snaclec A9.